We begin with the raw amino-acid sequence, 271 residues long: Methylthioribulose-1-phosphate dehydratase (271 aa).

Cys-123 contributes to the substrate binding site. 2 residues coordinate Zn(2+): His-141 and His-143. Catalysis depends on Glu-166, which acts as the Proton donor/acceptor. Zn(2+) is bound at residue His-231.

The protein belongs to the aldolase class II family. MtnB subfamily. Requires Zn(2+) as cofactor.

The protein resides in the cytoplasm. It carries out the reaction 5-(methylsulfanyl)-D-ribulose 1-phosphate = 5-methylsulfanyl-2,3-dioxopentyl phosphate + H2O. It functions in the pathway amino-acid biosynthesis; L-methionine biosynthesis via salvage pathway; L-methionine from S-methyl-5-thio-alpha-D-ribose 1-phosphate: step 2/6. Its function is as follows. Catalyzes the dehydration of methylthioribulose-1-phosphate (MTRu-1-P) into 2,3-diketo-5-methylthiopentyl-1-phosphate (DK-MTP-1-P). The sequence is that of Methylthioribulose-1-phosphate dehydratase from Candida dubliniensis (strain CD36 / ATCC MYA-646 / CBS 7987 / NCPF 3949 / NRRL Y-17841) (Yeast).